The following is a 479-amino-acid chain: Adenylate kinase 8 (479 aa).

Adenylate kinase stretches follow at residues 58 to 258 (PKVV…TYVQ) and 269 to 471 (PKVL…SGII). An ATP-binding site is contributed by 67–72 (ASGKTT). Positions 87–113 (TKESLLEREFSRLSVEAKSYYQVYKKI) are NMP 1. AMP-binding positions include 140-143 (GIPE), Gln147, and Arg203. The LID 1 stretch occupies residues 177–206 (GKRIDPVTGEIYHTTFDWPPEPEIQNRLRQ). 278–283 (GSGKRL) contacts ATP. The NMP 2 stretch occupies residues 298–327 (SCGQLLKEAVAAKSSFGELIQPFFEKRMTV). Residues 325-327 (MTV), 354-357 (GFPR), and Gln361 each bind AMP. An LID 2 region spans residues 391-424 (LRRTDPVTGERFHLMYKPPPTIEVQVRLLQNPKD). An ATP-binding site is contributed by Arg392.

Belongs to the adenylate kinase family. Interacts with CFAP45 and CFAP52; CFAP45 and AK8 dimerization may create a cavity at the interface of the dimer that can accommodate AMP.

It is found in the cytoplasm. The protein localises to the cytosol. The protein resides in the cytoskeleton. Its subcellular location is the cilium axoneme. It catalyses the reaction AMP + ATP = 2 ADP. It carries out the reaction a 2'-deoxyribonucleoside 5'-diphosphate + ATP = a 2'-deoxyribonucleoside 5'-triphosphate + ADP. The enzyme catalyses a ribonucleoside 5'-diphosphate + ATP = a ribonucleoside 5'-triphosphate + ADP. Its function is as follows. Nucleoside monophosphate (NMP) kinase that catalyzes the reversible transfer of the terminal phosphate group between nucleoside triphosphates and monophosphates. Has highest activity toward AMP, and weaker activity toward dAMP, CMP and dCMP. Also displays broad nucleoside diphosphate kinase activity. This Mus musculus (Mouse) protein is Adenylate kinase 8 (Ak8).